A 627-amino-acid chain; its full sequence is Hemocyanin D chain (627 aa).

Residues histidine 171, histidine 175, histidine 202, histidine 322, histidine 326, and histidine 362 each contribute to the Cu cation site. Asparagine 445 carries an N-linked (GlcNAc...) asparagine glycan. Cysteine 531 and cysteine 579 form a disulfide bridge.

It belongs to the tyrosinase family. Hemocyanin subfamily. Tarantula hemocyanin is a 24-chain polymer with seven different chains identified. As to expression, hemolymph.

The protein resides in the secreted. It localises to the extracellular space. In terms of biological role, hemocyanins are copper-containing oxygen carriers occurring freely dissolved in the hemolymph of many mollusks and arthropods. This Aphonopelma sp. (American tarantula) protein is Hemocyanin D chain (HCD).